A 167-amino-acid chain; its full sequence is Dihydrofolate reductase (167 aa).

The DHFR domain occupies 1 to 162 (MFISMWAQDK…YPHRFQKWQK (162 aa)). Residues alanine 7 and 13–19 (LIGKDGL) contribute to the NADP(+) site. Residue aspartate 27 participates in substrate binding. 45 to 46 (KT) is an NADP(+) binding site. Substrate is bound at residue arginine 58. NADP(+) is bound by residues 64–65 (TT) and 99–106 (GGSRIFQA). Threonine 117 contributes to the substrate binding site.

Belongs to the dihydrofolate reductase family.

The catalysed reaction is (6S)-5,6,7,8-tetrahydrofolate + NADP(+) = 7,8-dihydrofolate + NADPH + H(+). The protein operates within cofactor biosynthesis; tetrahydrofolate biosynthesis; 5,6,7,8-tetrahydrofolate from 7,8-dihydrofolate: step 1/1. Its function is as follows. Key enzyme in folate metabolism. Catalyzes an essential reaction for de novo glycine and purine synthesis, and for DNA precursor synthesis. This is Dihydrofolate reductase (folA) from Enterococcus faecium (Streptococcus faecium).